Here is a 455-residue protein sequence, read N- to C-terminus: Bifunctional protein GlmU (455 aa).

Residues 1 to 226 (MALNVVILAA…AIEVEGANNR (226 aa)) are pyrophosphorylase. Residues 8–11 (LAAG), Lys22, Gln73, 78–79 (GT), 100–102 (YGD), Gly137, Glu151, Asn166, and Asn224 contribute to the UDP-N-acetyl-alpha-D-glucosamine site. Residue Asp102 participates in Mg(2+) binding. Asn224 serves as a coordination point for Mg(2+). Residues 227 to 247 (VQLAQLERAYQARAAEKLMLE) form a linker region. The N-acetyltransferase stretch occupies residues 248 to 455 (GANLRDPARL…WARPVKKPKS (208 aa)). The UDP-N-acetyl-alpha-D-glucosamine site is built by Arg330 and Lys348. The Proton acceptor role is filled by His360. Residues Tyr363 and Asn374 each coordinate UDP-N-acetyl-alpha-D-glucosamine. Acetyl-CoA-binding positions include Ala377, 383–384 (NY), Ser402, Ala420, and Arg437.

It in the N-terminal section; belongs to the N-acetylglucosamine-1-phosphate uridyltransferase family. The protein in the C-terminal section; belongs to the transferase hexapeptide repeat family. Homotrimer. It depends on Mg(2+) as a cofactor.

It localises to the cytoplasm. It catalyses the reaction alpha-D-glucosamine 1-phosphate + acetyl-CoA = N-acetyl-alpha-D-glucosamine 1-phosphate + CoA + H(+). It carries out the reaction N-acetyl-alpha-D-glucosamine 1-phosphate + UTP + H(+) = UDP-N-acetyl-alpha-D-glucosamine + diphosphate. Its pathway is nucleotide-sugar biosynthesis; UDP-N-acetyl-alpha-D-glucosamine biosynthesis; N-acetyl-alpha-D-glucosamine 1-phosphate from alpha-D-glucosamine 6-phosphate (route II): step 2/2. The protein operates within nucleotide-sugar biosynthesis; UDP-N-acetyl-alpha-D-glucosamine biosynthesis; UDP-N-acetyl-alpha-D-glucosamine from N-acetyl-alpha-D-glucosamine 1-phosphate: step 1/1. It participates in bacterial outer membrane biogenesis; LPS lipid A biosynthesis. Its function is as follows. Catalyzes the last two sequential reactions in the de novo biosynthetic pathway for UDP-N-acetylglucosamine (UDP-GlcNAc). The C-terminal domain catalyzes the transfer of acetyl group from acetyl coenzyme A to glucosamine-1-phosphate (GlcN-1-P) to produce N-acetylglucosamine-1-phosphate (GlcNAc-1-P), which is converted into UDP-GlcNAc by the transfer of uridine 5-monophosphate (from uridine 5-triphosphate), a reaction catalyzed by the N-terminal domain. The polypeptide is Bifunctional protein GlmU (Shewanella sediminis (strain HAW-EB3)).